Here is a 271-residue protein sequence, read N- to C-terminus: Enolase-phosphatase E1 (271 aa).

Residues Asp16 and Glu18 each contribute to the Mg(2+) site. Residues 150-151 (SS) and Lys199 contribute to the substrate site. Residue Asp226 participates in Mg(2+) binding.

It belongs to the HAD-like hydrolase superfamily. MasA/MtnC family. Monomer. Mg(2+) is required as a cofactor.

Its subcellular location is the cytoplasm. It localises to the nucleus. It catalyses the reaction 5-methylsulfanyl-2,3-dioxopentyl phosphate + H2O = 1,2-dihydroxy-5-(methylsulfanyl)pent-1-en-3-one + phosphate. Its pathway is amino-acid biosynthesis; L-methionine biosynthesis via salvage pathway; L-methionine from S-methyl-5-thio-alpha-D-ribose 1-phosphate: step 3/6. The protein operates within amino-acid biosynthesis; L-methionine biosynthesis via salvage pathway; L-methionine from S-methyl-5-thio-alpha-D-ribose 1-phosphate: step 4/6. Its function is as follows. Bifunctional enzyme that catalyzes the enolization of 2,3-diketo-5-methylthiopentyl-1-phosphate (DK-MTP-1-P) into the intermediate 2-hydroxy-3-keto-5-methylthiopentenyl-1-phosphate (HK-MTPenyl-1-P), which is then dephosphorylated to form the acireductone 1,2-dihydroxy-3-keto-5-methylthiopentene (DHK-MTPene). This Candida dubliniensis (strain CD36 / ATCC MYA-646 / CBS 7987 / NCPF 3949 / NRRL Y-17841) (Yeast) protein is Enolase-phosphatase E1.